Reading from the N-terminus, the 922-residue chain is Neuropilin-1 (922 aa).

The N-terminal stretch at 1-21 is a signal peptide; it reads MERGLPLLCATLALALALAGA. The Extracellular segment spans residues 22–855; it reads FRSDKCGGTI…PGNVLKTLDP (834 aa). Disulfide bonds link C27/C54, C82/C104, and C147/C173. 2 consecutive CUB domains span residues 27 to 141 and 147 to 265; these read CGGT…YEIF and CSQN…YSVL. N-linked (GlcNAc...) asparagine glycosylation occurs at N150. Residues E195, D209, and D250 each contribute to the Ca(2+) site. A disulfide bridge connects residues C206 and C228. 3 N-linked (GlcNAc...) asparagine glycosylation sites follow: N261, N300, and N522. Cystine bridges form between C275/C424 and C431/C583. F5/8 type C domains are found at residues 275–424 and 431–583; these read CMEA…VYGC and CSGM…LLGC. A glycan (O-linked (Xyl...) (chondroitin sulfate) serine; alternate) is linked at S612. S612 carries an O-linked (Xyl...) (heparan sulfate) serine; alternate glycan. The 167-residue stretch at 645–811 folds into the MAM domain; the sequence is TYGFNCEFGW…NHIPQEDCAK (167 aa). S829 carries an O-linked (Xyl...) (chondroitin sulfate) serine glycan. An N-linked (GlcNAc...) asparagine glycan is attached at N841. A helical membrane pass occupies residues 856–880; that stretch reads ILITIIAMSALGVLLGAVCGVVLYC. Residues 881–922 are Cytoplasmic-facing; sequence ACWHNGMSERNLSALENYNFELVDGVKLKKDKLNPQSNYSEA. Residue S893 is modified to Phosphoserine.

The protein belongs to the neuropilin family. As to quaternary structure, homodimer, and heterodimer with NRP2. Binds PLXNB1. Interacts with FER. Interacts with VEGFA. Interacts with ABCB8/MITOSUR in mitochondria. In terms of tissue distribution, found in the embryonic nervous system. Expressed in dorsal root ganglia.

It localises to the mitochondrion membrane. The protein resides in the cell membrane. The protein localises to the cytoplasm. Its function is as follows. Cell-surface receptor involved in the development of the cardiovascular system, in angiogenesis, in the formation of certain neuronal circuits and in organogenesis outside the nervous system. Mediates the chemorepulsant activity of semaphorins. Recognizes a C-end rule (CendR) motif R/KXXR/K on its ligands which causes cellular internalization and vascular leakage. It binds to semaphorin 3A, the PLGF-2 isoform of PGF, the VEGF165 isoform of VEGFA and VEGFB. Coexpression with KDR results in increased VEGF165 binding to KDR as well as increased chemotaxis. Regulates VEGF-induced angiogenesis. Binding to VEGFA initiates a signaling pathway needed for motor neuron axon guidance and cell body migration, including for the caudal migration of facial motor neurons from rhombomere 4 to rhombomere 6 during embryonic development. Regulates mitochondrial iron transport via interaction with ABCB8/MITOSUR. In Rattus norvegicus (Rat), this protein is Neuropilin-1 (Nrp1).